The following is a 340-amino-acid chain: Putative phosphatidylcholine:ceramide cholinephosphotransferase 3 (340 aa).

The disordered stretch occupies residues 1 to 25 (MGSVSKTVISARGASPDDEQNGTKN). 4 helical membrane-spanning segments follow: residues 36 to 56 (CIFL…VLAY), 81 to 101 (SSLG…LLVI), 178 to 198 (LLFS…AYYL), and 202 to 222 (IKPL…CMTI). Histidine 183 is an active-site residue. Residues 223-340 (SRTHYTIDVV…SSSSTYPLPC (118 aa)) are Cytoplasmic-facing. Active-site residues include histidine 226 and aspartate 230. The segment at 294 to 313 (STPRGQERGGASAESSDSSV) is disordered.

Belongs to the sphingomyelin synthase family.

It is found in the membrane. It carries out the reaction an N-acyl-sphingoid base + a 1,2-diacyl-sn-glycero-3-phosphocholine = an N-(acyl)-sphingosylphosphocholine + a 1,2-diacyl-sn-glycerol. The enzyme catalyses an N-acylsphing-4-enine + a 1,2-diacyl-sn-glycero-3-phosphocholine = a sphingomyelin + a 1,2-diacyl-sn-glycerol. The catalysed reaction is an N-acyl-15-methylhexadecasphing-4-enine + a 1,2-diacyl-sn-glycero-3-phosphocholine = an N-acyl-15-methylhexadecasphing-4-enine-1-phosphocholine + a 1,2-diacyl-sn-glycerol. It functions in the pathway lipid metabolism; sphingolipid metabolism. Functionally, bidirectional lipid cholinephosphotransferase capable of converting phosphatidylcholine (PC) and ceramide to sphingomyelin (SM) and diacylglycerol (DAG) and vice versa. Direction is dependent on the relative concentrations of DAG and ceramide as phosphocholine acceptors. Directly and specifically recognizes the choline head group on the substrate. Also requires two fatty chains on the choline-P donor molecule in order to be recognized efficiently as a substrate. Does not function strictly as a SM synthase. C.elegans contains specific sphingoid bases, which are unique or different in structure compared to the sphingoid bases found in other animals. Two examples of these distinctive compounds are: 15-methylhexadecasphinganine and 15-methylhexadecasphing-4-enine. The chain is Putative phosphatidylcholine:ceramide cholinephosphotransferase 3 (sms-3) from Caenorhabditis elegans.